We begin with the raw amino-acid sequence, 665 residues long: Auxin response factor 1 (665 aa).

Residues 124-226 (FCKTLTASDT…ELRVGVRRHM (103 aa)) constitute a DNA-binding region (TF-B3). Disordered regions lie at residues 356–408 (VANS…SVPL), 496–542 (PVPS…RQIR), and 645–665 (KADA…AGSR). Polar residues-rich tracts occupy residues 497–519 (VPSN…SDIP), 530–542 (LRSP…RQIR), and 651–665 (NGNT…AGSR). The 94-residue stretch at 542 to 635 (RSCTKVHMQG…EVKKLSPKNK (94 aa)) folds into the PB1 domain.

The protein belongs to the ARF family. As to quaternary structure, homodimers and heterodimers. Interacts with the auxin-responsive proteins IAA12, IAA13, IAA17 and with ARF2. Binds to RIN13 in the nucleus. As to expression, expressed in the whole plant.

Its subcellular location is the nucleus. It localises to the cytoplasm. Auxin response factors (ARFs) are transcriptional factors that bind specifically to the DNA sequence 5'-TGTCTC-3' found in the auxin-responsive promoter elements (AuxREs). Seems to act as transcriptional repressor. Formation of heterodimers with Aux/IAA proteins may alter their ability to modulate early auxin response genes expression. Promotes flowering, stamen development, floral organ abscission and fruit dehiscence. Acts as a repressor of IAA2, IAA3 and IAA7. Together with RIN13, promotes leaf senescence and cell death. The chain is Auxin response factor 1 from Arabidopsis thaliana (Mouse-ear cress).